Here is a 208-residue protein sequence, read N- to C-terminus: Uracil phosphoribosyltransferase (208 aa).

Residues arginine 78, arginine 103, and aspartate 130 to serine 138 contribute to the 5-phospho-alpha-D-ribose 1-diphosphate site. Uracil-binding positions include isoleucine 193 and glycine 198 to alanine 200. Residue aspartate 199 coordinates 5-phospho-alpha-D-ribose 1-diphosphate.

It belongs to the UPRTase family. The cofactor is Mg(2+).

It catalyses the reaction UMP + diphosphate = 5-phospho-alpha-D-ribose 1-diphosphate + uracil. It participates in pyrimidine metabolism; UMP biosynthesis via salvage pathway; UMP from uracil: step 1/1. With respect to regulation, allosterically activated by GTP. Catalyzes the conversion of uracil and 5-phospho-alpha-D-ribose 1-diphosphate (PRPP) to UMP and diphosphate. The polypeptide is Uracil phosphoribosyltransferase (Photobacterium profundum (strain SS9)).